The primary structure comprises 80 residues: MKIKDAVNMIRWEYREKIDDYVIIIIDRLTENGLKEISFSELDAVDNNYLYLKSEENTVIPLHRVLMIKRKSDNALIWKR.

It belongs to the UPF0248 family.

The chain is UPF0248 protein YG5714_2801 from Saccharolobus islandicus (strain Y.G.57.14 / Yellowstone #1) (Sulfolobus islandicus).